The chain runs to 159 residues: NADH-quinone oxidoreductase subunit B (159 aa).

The [4Fe-4S] cluster site is built by Cys-37, Cys-38, Cys-102, and Cys-132.

This sequence belongs to the complex I 20 kDa subunit family. NDH-1 is composed of 14 different subunits. Subunits NuoB, C, D, E, F, and G constitute the peripheral sector of the complex. Requires [4Fe-4S] cluster as cofactor.

It localises to the cell inner membrane. The enzyme catalyses a quinone + NADH + 5 H(+)(in) = a quinol + NAD(+) + 4 H(+)(out). Functionally, NDH-1 shuttles electrons from NADH, via FMN and iron-sulfur (Fe-S) centers, to quinones in the respiratory chain. Couples the redox reaction to proton translocation (for every two electrons transferred, four hydrogen ions are translocated across the cytoplasmic membrane), and thus conserves the redox energy in a proton gradient. The protein is NADH-quinone oxidoreductase subunit B of Vesicomyosocius okutanii subsp. Calyptogena okutanii (strain HA).